Reading from the N-terminus, the 109-residue chain is Nucleoid-associated protein YbaB (109 aa).

Belongs to the YbaB/EbfC family. In terms of assembly, homodimer.

The protein localises to the cytoplasm. The protein resides in the nucleoid. Binds to DNA and alters its conformation. May be involved in regulation of gene expression, nucleoid organization and DNA protection. The protein is Nucleoid-associated protein YbaB of Escherichia coli O8 (strain IAI1).